The sequence spans 152 residues: Deoxyuridine 5'-triphosphate nucleotidohydrolase (152 aa).

Substrate is bound by residues 72 to 74, Asn-85, and 89 to 91; these read RSG and TID.

It belongs to the dUTPase family. Mg(2+) serves as cofactor.

The enzyme catalyses dUTP + H2O = dUMP + diphosphate + H(+). The protein operates within pyrimidine metabolism; dUMP biosynthesis; dUMP from dCTP (dUTP route): step 2/2. Functionally, this enzyme is involved in nucleotide metabolism: it produces dUMP, the immediate precursor of thymidine nucleotides and it decreases the intracellular concentration of dUTP so that uracil cannot be incorporated into DNA. The chain is Deoxyuridine 5'-triphosphate nucleotidohydrolase from Rhodopseudomonas palustris (strain BisB5).